The following is a 144-amino-acid chain: Granulocyte-macrophage colony-stimulating factor (144 aa).

The signal sequence occupies residues 1–17; sequence MWLQGLLLLGTVACSIS. S24 is a glycosylation site (O-linked (GalNAc...) serine). T27 carries O-linked (GalNAc...) threonine glycosylation. 2 N-linked (GlcNAc...) asparagine glycosylation sites follow: N44 and N54. 2 cysteine pairs are disulfide-bonded: C71–C113 and C105–C138.

It belongs to the GM-CSF family. Monomer. The signaling GM-CSF receptor complex is a dodecamer of two head-to-head hexamers of two alpha, two beta, and two ligand subunits.

The protein localises to the secreted. Functionally, cytokine that stimulates the growth and differentiation of hematopoietic precursor cells from various lineages, including granulocytes, macrophages, eosinophils and erythrocytes. The chain is Granulocyte-macrophage colony-stimulating factor (CSF2) from Chlorocebus aethiops (Green monkey).